The chain runs to 481 residues: Beta-amyrin 28-monooxygenase (481 aa).

The chain crosses the membrane as a helical span at residues 4-24 (FYVPLLSLFVLFVSLSFYFLF). Cys-428 contacts heme.

It belongs to the cytochrome P450 family. Requires heme as cofactor.

The protein localises to the membrane. It carries out the reaction beta-amyrin + 3 reduced [NADPH--hemoprotein reductase] + 3 O2 = oleanolate + 3 oxidized [NADPH--hemoprotein reductase] + 4 H2O + 4 H(+). Catalyzes the oxidation of the methyl group to a carboxyl group at the C-28 position of beta-amyrin to form oleanolate. The sequence is that of Beta-amyrin 28-monooxygenase from Kalopanax septemlobus (Castor aralia).